A 72-amino-acid chain; its full sequence is Small proline-rich protein 2D (72 aa).

Low complexity predominate over residues 1-11 (MSYQQQQCKQP). The tract at residues 1–20 (MSYQQQQCKQPCQPPPVCPT) is disordered. A run of 3 repeats spans residues 21 to 29 (PKCPEPCPP), 30 to 38 (PKCPEPCPS), and 39 to 47 (PKCPQPCPP). A 3 X 9 AA tandem repeats of P-K-C-P-[EQ]-P-C-P-[PS] region spans residues 21-47 (PKCPEPCPPPKCPEPCPSPKCPQPCPP). Pro residues-rich tracts occupy residues 33 to 47 (PEPC…PCPP) and 56 to 72 (PVTP…PKSK). The interval 33-72 (PEPCPSPKCPQPCPPQQCQQKYPPVTPSPPCQPKCPPKSK) is disordered.

This sequence belongs to the cornifin (SPRR) family.

It is found in the cytoplasm. Functionally, cross-linked envelope protein of keratinocytes. It is a keratinocyte protein that first appears in the cell cytosol, but ultimately becomes cross-linked to membrane proteins by transglutaminase. All that results in the formation of an insoluble envelope beneath the plasma membrane. The protein is Small proline-rich protein 2D (SPRR2D) of Homo sapiens (Human).